The sequence spans 611 residues: Elongation factor 4 (611 aa).

The tr-type G domain maps to 11-193 (EKIRNFSIIA…QVVEYVPAPS (183 aa)). GTP contacts are provided by residues 23-28 (DHGKST) and 140-143 (NKID).

Belongs to the TRAFAC class translation factor GTPase superfamily. Classic translation factor GTPase family. LepA subfamily.

It is found in the cell membrane. It carries out the reaction GTP + H2O = GDP + phosphate + H(+). In terms of biological role, required for accurate and efficient protein synthesis under certain stress conditions. May act as a fidelity factor of the translation reaction, by catalyzing a one-codon backward translocation of tRNAs on improperly translocated ribosomes. Back-translocation proceeds from a post-translocation (POST) complex to a pre-translocation (PRE) complex, thus giving elongation factor G a second chance to translocate the tRNAs correctly. Binds to ribosomes in a GTP-dependent manner. In Enterococcus faecalis (strain ATCC 700802 / V583), this protein is Elongation factor 4.